A 200-amino-acid polypeptide reads, in one-letter code: Beta-1,6-glucan synthesis-associated protein KEG1 (200 aa).

At 1 to 15 (MAGIKLTHKLYQYYQ) the chain is on the lumenal side. The chain crosses the membrane as a helical span at residues 16–36 (LATSFLYAALLIRWLILMPLV). At 37 to 44 (GSRFLPGG) the chain is on the cytoplasmic side. A helical membrane pass occupies residues 45–65 (IHEFLIYLMFYSSIMEVIWLL). Topologically, residues 66–82 (RFHGFKYGLLSRTFLKD) are lumenal. A helical membrane pass occupies residues 83–103 (LNFIYLVSVIHFYDDYEHALI). Residues 104–145 (LKNASYSSFIISLSLSQAYCHWCKLFKRKGVKERTLVWKVNT) are Cytoplasmic-facing. Residues 146–166 (FVTLPILYLSEFALLLLNIQV) traverse the membrane as a helical segment. The Lumenal segment spans residues 167–173 (KNYHSTP). Residues 174 to 194 (TLDIINRVVLLAYFPVLLTAY) form a helical membrane-spanning segment. At 195-200 (KKLLTK) the chain is on the cytoplasmic side.

As to quaternary structure, interacts with KRE6.

It localises to the endoplasmic reticulum membrane. Its function is as follows. Involved in the biosynthesis of (1-&gt;6)-beta-D-glucan polymers of the cell wall. Required for viability. Involved in maintaining chromosome stability. The polypeptide is Beta-1,6-glucan synthesis-associated protein KEG1 (KEG1) (Saccharomyces cerevisiae (strain ATCC 204508 / S288c) (Baker's yeast)).